Here is a 274-residue protein sequence, read N- to C-terminus: Putative pyruvate, phosphate dikinase regulatory protein (274 aa).

Position 153–160 (153–160 (GISRTSKT)) interacts with ADP.

This sequence belongs to the pyruvate, phosphate/water dikinase regulatory protein family. PDRP subfamily.

The catalysed reaction is N(tele)-phospho-L-histidyl/L-threonyl-[pyruvate, phosphate dikinase] + ADP = N(tele)-phospho-L-histidyl/O-phospho-L-threonyl-[pyruvate, phosphate dikinase] + AMP + H(+). It catalyses the reaction N(tele)-phospho-L-histidyl/O-phospho-L-threonyl-[pyruvate, phosphate dikinase] + phosphate + H(+) = N(tele)-phospho-L-histidyl/L-threonyl-[pyruvate, phosphate dikinase] + diphosphate. Functionally, bifunctional serine/threonine kinase and phosphorylase involved in the regulation of the pyruvate, phosphate dikinase (PPDK) by catalyzing its phosphorylation/dephosphorylation. This Bartonella henselae (strain ATCC 49882 / DSM 28221 / CCUG 30454 / Houston 1) (Rochalimaea henselae) protein is Putative pyruvate, phosphate dikinase regulatory protein.